The chain runs to 86 residues: Apolipoprotein C-I (86 aa).

Positions methionine 1–glycine 26 are cleaved as a signal peptide.

Belongs to the apolipoprotein C1 family.

It is found in the secreted. In terms of biological role, inhibitor of lipoprotein binding to the low density lipoprotein (LDL) receptor, LDL receptor-related protein, and very low density lipoprotein (VLDL) receptor. Associates with high density lipoproteins (HDL) and the triacylglycerol-rich lipoproteins in the plasma and makes up about 10% of the protein of the VLDL and 2% of that of HDL. Appears to interfere directly with fatty acid uptake and is also the major plasma inhibitor of cholesteryl ester transfer protein (CETP). Binds free fatty acids and reduces their intracellular esterification. Modulates the interaction of APOE with beta-migrating VLDL and inhibits binding of beta-VLDL to the LDL receptor-related protein. In Plecturocebus moloch (Dusky titi monkey), this protein is Apolipoprotein C-I (APOC1).